A 547-amino-acid chain; its full sequence is Eukaryotic translation initiation factor 3 subunit D (547 aa).

Disordered stretches follow at residues 1–22 (MANFVLPPIHDNSDGSWGPSTS) and 114–159 (SVRG…TRDS). Residues 126–148 (GRGGQRGGFSTRGGRGGARGGYG) are compositionally biased toward gly residues. The tract at residues 284 to 298 (PLDYITVNENAADPP) is RNA gate.

Belongs to the eIF-3 subunit D family. As to quaternary structure, component of the eukaryotic translation initiation factor 3 (eIF-3) complex.

It is found in the cytoplasm. In terms of biological role, mRNA cap-binding component of the eukaryotic translation initiation factor 3 (eIF-3) complex, which is involved in protein synthesis of a specialized repertoire of mRNAs and, together with other initiation factors, stimulates binding of mRNA and methionyl-tRNAi to the 40S ribosome. The eIF-3 complex specifically targets and initiates translation of a subset of mRNAs involved in cell proliferation. In the eIF-3 complex, eif3d specifically recognizes and binds the 7-methylguanosine cap of a subset of mRNAs. The protein is Eukaryotic translation initiation factor 3 subunit D of Cryptococcus neoformans var. neoformans serotype D (strain B-3501A) (Filobasidiella neoformans).